The chain runs to 432 residues: Pachytene checkpoint protein 2 homolog (432 aa).

Position 1 is an N-acetylmethionine (methionine 1). 179 to 186 (GPPGTGKT) contacts ATP.

Belongs to the AAA ATPase family. PCH2 subfamily. As to quaternary structure, specifically interacts with the ligand binding domain of the thyroid receptor (TR). This interaction does not require the presence of thyroid hormone for its interaction. Interacts with proteasome subunit PSMA8; to participate in meiosis progression during spermatogenesis.

Plays a key role in chromosome recombination and chromosome structure development during meiosis. Required at early steps in meiotic recombination that leads to non-crossovers pathways. Also needed for efficient completion of homologous synapsis by influencing crossover distribution along the chromosomes affecting both crossovers and non-crossovers pathways. Also required for development of higher-order chromosome structures and is needed for synaptonemal-complex formation. In males, required for efficient synapsis of the sex chromosomes and for sex body formation. Promotes early steps of the DNA double-strand breaks (DSBs) repair process upstream of the assembly of RAD51 complexes. Required for depletion of HORMAD1 and HORMAD2 from synapsed chromosomes. This is Pachytene checkpoint protein 2 homolog (TRIP13) from Canis lupus familiaris (Dog).